The following is a 518-amino-acid chain: Putative N-acetylmuramoyl-L-alanine amidase YrvJ (518 aa).

The signal sequence occupies residues 1 to 27 (MNKKYFVLIVCIIFTSALFPTFSSVTA). 4 consecutive SH3b domains span residues 29–91 (QGEA…ITKE), 102–164 (SDTV…TSGG), 181–243 (STTG…LTSS), and 258–320 (AKKA…VQTS). 2 disordered regions span residues 94 to 121 (ASTS…PGTS) and 160 to 186 (VTSG…TGTV). Low complexity-rich tracts occupy residues 95–108 (STSS…VTST) and 160–169 (VTSGGSSSAS). The disordered stretch occupies residues 322-352 (SAEEAGEPPVSDSPSGNGSLNNKTIIVDPGH). The segment covering 333 to 345 (DSPSGNGSLNNKT) has biased composition (polar residues). The region spanning 346 to 514 (IIVDPGHGGK…VTDGIESGLE (169 aa)) is the MurNAc-LAA domain.

It belongs to the N-acetylmuramoyl-L-alanine amidase 3 family.

The protein localises to the secreted. The protein resides in the cell wall. The enzyme catalyses Hydrolyzes the link between N-acetylmuramoyl residues and L-amino acid residues in certain cell-wall glycopeptides.. Its function is as follows. Probably involved in cell-wall metabolism. This chain is Putative N-acetylmuramoyl-L-alanine amidase YrvJ (yrvJ), found in Bacillus subtilis (strain 168).